Consider the following 200-residue polypeptide: Outer-membrane lipoprotein carrier protein (200 aa).

The signal sequence occupies residues 1–18; the sequence is MIGLFLAAPLVLSSAVWA.

This sequence belongs to the LolA family. Monomer.

It is found in the periplasm. In terms of biological role, participates in the translocation of lipoproteins from the inner membrane to the outer membrane. Only forms a complex with a lipoprotein if the residue after the N-terminal Cys is not an aspartate (The Asp acts as a targeting signal to indicate that the lipoprotein should stay in the inner membrane). This chain is Outer-membrane lipoprotein carrier protein, found in Photobacterium profundum (strain SS9).